The primary structure comprises 1295 residues: Phosphoribosylformylglycinamidine synthase (1295 aa).

A disordered region spans residues 305–327; the sequence is WPGAATGSGGEIRDEGATGRGAK. ATP-binding positions include 307–318 and A678; that span reads GAATGSGGEIRD. Residues E718, N722, and D884 each coordinate Mg(2+). Residue S886 coordinates ATP. The region spanning 1042–1295 is the Glutamine amidotransferase type-1 domain; that stretch reads VAVLREQGVN…IFRNARKQLG (254 aa). C1135 acts as the Nucleophile in catalysis. Catalysis depends on residues H1260 and E1262.

In the N-terminal section; belongs to the FGAMS family. Monomer.

The protein resides in the cytoplasm. The catalysed reaction is N(2)-formyl-N(1)-(5-phospho-beta-D-ribosyl)glycinamide + L-glutamine + ATP + H2O = 2-formamido-N(1)-(5-O-phospho-beta-D-ribosyl)acetamidine + L-glutamate + ADP + phosphate + H(+). Its pathway is purine metabolism; IMP biosynthesis via de novo pathway; 5-amino-1-(5-phospho-D-ribosyl)imidazole from N(2)-formyl-N(1)-(5-phospho-D-ribosyl)glycinamide: step 1/2. Its function is as follows. Phosphoribosylformylglycinamidine synthase involved in the purines biosynthetic pathway. Catalyzes the ATP-dependent conversion of formylglycinamide ribonucleotide (FGAR) and glutamine to yield formylglycinamidine ribonucleotide (FGAM) and glutamate. The protein is Phosphoribosylformylglycinamidine synthase of Shigella sonnei (strain Ss046).